The primary structure comprises 280 residues: Fructose-1,6-bisphosphatase class 1 (280 aa).

Mg(2+) is bound by residues E64, D83, L85, and D86. Residues 86–89, Y189, and K220 contribute to the substrate site; that span reads DGSS. Residue E226 participates in Mg(2+) binding.

This sequence belongs to the FBPase class 1 family. In terms of assembly, homotetramer. The cofactor is Mg(2+).

The protein resides in the cytoplasm. The catalysed reaction is beta-D-fructose 1,6-bisphosphate + H2O = beta-D-fructose 6-phosphate + phosphate. It participates in carbohydrate biosynthesis; gluconeogenesis. The polypeptide is Fructose-1,6-bisphosphatase class 1 (Campylobacter jejuni (strain RM1221)).